Here is a 517-residue protein sequence, read N- to C-terminus: Ribose import ATP-binding protein RbsA (517 aa).

ABC transporter domains lie at 11-251 (LEMR…VGRD) and 263-507 (YDPG…ALAT). Position 43-50 (43-50 (GENGAGKS)) interacts with ATP.

Belongs to the ABC transporter superfamily. Ribose importer (TC 3.A.1.2.1) family. In terms of assembly, the complex is composed of an ATP-binding protein (RbsA), two transmembrane proteins (RbsC) and a solute-binding protein (RbsB).

Its subcellular location is the cell inner membrane. The enzyme catalyses D-ribose(out) + ATP + H2O = D-ribose(in) + ADP + phosphate + H(+). Part of the ABC transporter complex RbsABC involved in ribose import. Responsible for energy coupling to the transport system. This is Ribose import ATP-binding protein RbsA from Burkholderia pseudomallei (strain K96243).